The chain runs to 78 residues: Large ribosomal subunit protein bL28 (78 aa).

Belongs to the bacterial ribosomal protein bL28 family.

This is Large ribosomal subunit protein bL28 from Erwinia tasmaniensis (strain DSM 17950 / CFBP 7177 / CIP 109463 / NCPPB 4357 / Et1/99).